A 524-amino-acid polypeptide reads, in one-letter code: Protein hunchback (524 aa).

Disordered regions lie at residues 42 to 86 (IVKR…PQTQ) and 101 to 187 (YNHN…DEQS). The span at 59-75 (SGSDFHSSSPSSDTSQD) shows a compositional bias: low complexity. The segment covering 76-86 (LQHSYQSPQTQ) has biased composition (polar residues). Composition is skewed to basic and acidic residues over residues 118–127 (KSEKEEKDME), 138–154 (RKPDDNQDHLRRLEMSL), and 164–178 (TSEHSVDELSGKSDN). 4 C2H2-type zinc fingers span residues 202-224 (FKCKQCDFVAITKLEQWNHSKVH), 231-253 (LTCPKCPFITEYKHHLEYHLRNH), 259-281 (FQCNKCDYTCVNKSMLNSHMKSH), and 298-311 (YCHSLKIHLRRYGH). Residues 402-442 (DLSKPGCSYTGEQKSRRKGPAFKVDPTQVESEEEDEETSTT) are disordered. 2 consecutive C2H2-type zinc fingers follow at residues 471–493 (NSCQYCNIAFGDAVLYTIHMGYH) and 499–523 (FTCNMCGVECSDKVSFFLHIARVSH).

It belongs to the hunchback C2H2-type zinc-finger protein family.

Its subcellular location is the nucleus. Gap class segmentation protein that controls development of head structures. The sequence is that of Protein hunchback (hb) from Tribolium castaneum (Red flour beetle).